The following is a 139-amino-acid chain: Autophagy-related protein 31 (139 aa).

The protein belongs to the ATG31 family. As to quaternary structure, forms a stable complex with ATG17 and ATG29. Interacts directly with ATG29. The ATG17-ATG29-ATG31 complex interacts with the ATG1-ATG13 complex. Note=The interaction with the ATG1-ATG13 complex is induced by starvation.

The protein localises to the preautophagosomal structure. Plays a role in starvation-induced autophagy. Involved in mitophagy. Functions with ATG17 and ATG29 at the preautophagosomal structure (PAS) in order to form normal autophagosomes under starvation conditions. The sequence is that of Autophagy-related protein 31 from Kluyveromyces marxianus (strain DMKU3-1042 / BCC 29191 / NBRC 104275) (Yeast).